Consider the following 63-residue polypeptide: UPF0370 protein PC1_1167 (63 aa).

Residues 3–23 (WLADYWWIILIILIGMLINGI) form a helical membrane-spanning segment. A disordered region spans residues 37–63 (NKPKLPPHRDNNDKWDDEDDDWPKKKP).

This sequence belongs to the UPF0370 family.

It is found in the cell membrane. The sequence is that of UPF0370 protein PC1_1167 from Pectobacterium carotovorum subsp. carotovorum (strain PC1).